Reading from the N-terminus, the 194-residue chain is MNISQNPSPNFTYFSDENFINPFMDNNDFSNLMFFDIDEGGNNGLIEEEISSPTSIVSSETFTGESGGSGSATTLSKKESTNRGSKESDQTKETGHRVAFRTRSKIDVMDDGFKWRKYGKKSVKNNINKRNYYKCSSEGCSVKKRVERDGDDAAYVITTYEGVHNHESLSNVYYNEMVLSYDHDNWNQHSLLRS.

Residues 58-97 form a disordered region; that stretch reads SSETFTGESGGSGSATTLSKKESTNRGSKESDQTKETGHR. Residues 76–96 are compositionally biased toward basic and acidic residues; the sequence is SKKESTNRGSKESDQTKETGH. The WRKY DNA-binding region spans 104–169; the sequence is SKIDVMDDGF…YEGVHNHESL (66 aa).

This sequence belongs to the WRKY group II-c family. As to quaternary structure, interacts with CAMBP25/VQ15.

Its subcellular location is the nucleus. In terms of biological role, transcription factor. Interacts specifically with the W box (5'-(T)TGAC[CT]-3'), a frequently occurring elicitor-responsive cis-acting element. Involved in defense responses. May act as positive regulator of salicylic acid (SA)-mediated signaling and negative regulator of jasmonic acid (JA)-mediated signaling. The sequence is that of Probable WRKY transcription factor 51 (WRKY51) from Arabidopsis thaliana (Mouse-ear cress).